We begin with the raw amino-acid sequence, 368 residues long: Outer membrane protein assembly factor BamC (368 aa).

The first 18 residues, 1-18 (MTTKFFIGTAIAVSVLSA), serve as a signal peptide directing secretion. C19 carries N-palmitoyl cysteine lipidation. A lipid anchor (S-diacylglycerol cysteine) is attached at C19.

This sequence belongs to the BamC family. In terms of assembly, part of the Bam complex.

It is found in the cell outer membrane. Part of the outer membrane protein assembly complex, which is involved in assembly and insertion of beta-barrel proteins into the outer membrane. The protein is Outer membrane protein assembly factor BamC of Pseudoalteromonas atlantica (strain T6c / ATCC BAA-1087).